The following is a 472-amino-acid chain: D-inositol 3-phosphate glycosyltransferase (472 aa).

Residue His48 coordinates 1D-myo-inositol 3-phosphate. Residues 54–55 (QP) and Gly62 contribute to the UDP-N-acetyl-alpha-D-glucosamine site. 1D-myo-inositol 3-phosphate contacts are provided by residues 59–64 (DAGGMN), Lys117, Tyr150, Thr174, and Arg194. Positions 282, 287, and 348 each coordinate UDP-N-acetyl-alpha-D-glucosamine. Phe357, Arg358, and Ala360 together coordinate Mg(2+). Residues Glu370 and Glu378 each contribute to the UDP-N-acetyl-alpha-D-glucosamine site. Thr384 serves as a coordination point for Mg(2+).

Belongs to the glycosyltransferase group 1 family. MshA subfamily. Homodimer.

It catalyses the reaction 1D-myo-inositol 3-phosphate + UDP-N-acetyl-alpha-D-glucosamine = 1D-myo-inositol 2-acetamido-2-deoxy-alpha-D-glucopyranoside 3-phosphate + UDP + H(+). Functionally, catalyzes the transfer of a N-acetyl-glucosamine moiety to 1D-myo-inositol 3-phosphate to produce 1D-myo-inositol 2-acetamido-2-deoxy-glucopyranoside 3-phosphate in the mycothiol biosynthesis pathway. In Streptomyces griseus subsp. griseus (strain JCM 4626 / CBS 651.72 / NBRC 13350 / KCC S-0626 / ISP 5235), this protein is D-inositol 3-phosphate glycosyltransferase.